The chain runs to 337 residues: Ferredoxin--NADP reductase (337 aa).

FAD-binding residues include aspartate 35, glutamine 43, tyrosine 48, alanine 88, phenylalanine 122, aspartate 289, and threonine 330.

The protein belongs to the ferredoxin--NADP reductase type 2 family. In terms of assembly, homodimer. FAD is required as a cofactor.

It carries out the reaction 2 reduced [2Fe-2S]-[ferredoxin] + NADP(+) + H(+) = 2 oxidized [2Fe-2S]-[ferredoxin] + NADPH. In Ehrlichia ruminantium (strain Welgevonden), this protein is Ferredoxin--NADP reductase.